The following is a 239-amino-acid chain: Transmembrane emp24 domain-containing protein 6 (239 aa).

Positions 1–21 (MFPLLLVAELVVLSLVTSVKS) are cleaved as a signal peptide. Topologically, residues 22–200 (QETDPLHGSK…FFLLQSNYTY (179 aa)) are lumenal. The 86-residue stretch at 53–138 (IECFWQFADQ…SIQVYLNFGV (86 aa)) folds into the GOLD domain. 2 N-linked (GlcNAc...) asparagine glycosylation sites follow: asparagine 156 and asparagine 197. Residues 201 to 223 (VNWWSTAQSLAIVLSGALQLYFL) traverse the membrane as a helical segment. Residues 224–239 (KRLFTASTTDTKKPRC) lie on the Cytoplasmic side of the membrane.

The protein belongs to the EMP24/GP25L family.

The protein localises to the endoplasmic reticulum membrane. The chain is Transmembrane emp24 domain-containing protein 6 (Tmed6) from Mus musculus (Mouse).